Here is a 432-residue protein sequence, read N- to C-terminus: Phosphomethylpyrimidine synthase (432 aa).

Substrate contacts are provided by residues asparagine 66, methionine 95, tyrosine 124, histidine 163, 185–187 (SRG), 226–229 (DGLR), and glutamate 265. Histidine 269 serves as a coordination point for Zn(2+). Tyrosine 292 lines the substrate pocket. Residue histidine 333 coordinates Zn(2+). Residues cysteine 409, cysteine 412, and cysteine 416 each contribute to the [4Fe-4S] cluster site.

Belongs to the ThiC family. Requires [4Fe-4S] cluster as cofactor.

The enzyme catalyses 5-amino-1-(5-phospho-beta-D-ribosyl)imidazole + S-adenosyl-L-methionine = 4-amino-2-methyl-5-(phosphooxymethyl)pyrimidine + CO + 5'-deoxyadenosine + formate + L-methionine + 3 H(+). It functions in the pathway cofactor biosynthesis; thiamine diphosphate biosynthesis. Its function is as follows. Catalyzes the synthesis of the hydroxymethylpyrimidine phosphate (HMP-P) moiety of thiamine from aminoimidazole ribotide (AIR) in a radical S-adenosyl-L-methionine (SAM)-dependent reaction. This chain is Phosphomethylpyrimidine synthase, found in Caldanaerobacter subterraneus subsp. tengcongensis (strain DSM 15242 / JCM 11007 / NBRC 100824 / MB4) (Thermoanaerobacter tengcongensis).